The following is a 201-amino-acid chain: MSRYRGPRFKKIRRLGALPGLTNKRPRTVRDLRNQSRSGKKSHYRIRLEEKQKLRFHYGLTERQLISYVRIARKAKGSTGEVLIQLLEMRLDNILFRLGMAYTIPAARQLVNHRHILVNGHIVDIPSYRCKPRDIITSKDKPKSGALIKNSIKAFPREELPNHLTLHPAPYKGLINQIIDTKWVGLKINELLVVEYYSRQT.

Residues 89–149 (MRLDNILFRL…DKPKSGALIK (61 aa)) enclose the S4 RNA-binding domain.

Belongs to the universal ribosomal protein uS4 family. In terms of assembly, part of the 30S ribosomal subunit. Contacts protein S5. The interaction surface between S4 and S5 is involved in control of translational fidelity.

Its subcellular location is the plastid. Functionally, one of the primary rRNA binding proteins, it binds directly to 16S rRNA where it nucleates assembly of the body of the 30S subunit. Its function is as follows. With S5 and S12 plays an important role in translational accuracy. The polypeptide is Small ribosomal subunit protein uS4c (rps4) (Cuscuta reflexa (Southern Asian dodder)).